The chain runs to 928 residues: DNA-binding protein RFX6 (928 aa).

Disordered regions lie at residues 1–22 (MAKVPVLEDAFLPAQPSPQVSP) and 53–102 (PGGA…AADL). The span at 92-101 (SHDSKTKAAD) shows a compositional bias: basic and acidic residues. The RFX-type winged-helix DNA-binding region spans 124 to 199 (TLQWLEENYI…YHYYGIGIKE (76 aa)).

It belongs to the RFX family. Interacts with RFX3.

It localises to the nucleus. Transcription factor required to direct islet cell differentiation during endocrine pancreas development. Specifically required for the differentiation of 4 of the 5 islet cell types and for the production of insulin. Not required for pancreatic PP (polypeptide-producing) cells differentiation. Acts downstream of NEUROG3 and regulates the transcription factors involved in beta-cell maturation and function, thereby restricting the expression of the beta-cell differentiation and specification genes, and thus the beta-cell fate choice. Activates transcription by forming a heterodimer with RFX3 and binding to the X-box in the promoter of target genes. Involved in glucose-stimulated insulin secretion by promoting insulin and L-type calcium channel gene transcription. The chain is DNA-binding protein RFX6 (RFX6) from Ailuropoda melanoleuca (Giant panda).